Reading from the N-terminus, the 207-residue chain is High frequency lysogenization protein HflD homolog (207 aa).

This sequence belongs to the HflD family.

It is found in the cytoplasm. It localises to the cell inner membrane. This Tolumonas auensis (strain DSM 9187 / NBRC 110442 / TA 4) protein is High frequency lysogenization protein HflD homolog.